Here is a 496-residue protein sequence, read N- to C-terminus: Glutamyl-tRNA(Gln) amidotransferase subunit A (496 aa).

Active-site charge relay system residues include K75 and S150. The Acyl-ester intermediate role is filled by S174.

This sequence belongs to the amidase family. GatA subfamily. As to quaternary structure, heterotrimer of A, B and C subunits.

It catalyses the reaction L-glutamyl-tRNA(Gln) + L-glutamine + ATP + H2O = L-glutaminyl-tRNA(Gln) + L-glutamate + ADP + phosphate + H(+). In terms of biological role, allows the formation of correctly charged Gln-tRNA(Gln) through the transamidation of misacylated Glu-tRNA(Gln) in organisms which lack glutaminyl-tRNA synthetase. The reaction takes place in the presence of glutamine and ATP through an activated gamma-phospho-Glu-tRNA(Gln). The protein is Glutamyl-tRNA(Gln) amidotransferase subunit A of Burkholderia ambifaria (strain ATCC BAA-244 / DSM 16087 / CCUG 44356 / LMG 19182 / AMMD) (Burkholderia cepacia (strain AMMD)).